Reading from the N-terminus, the 782-residue chain is Anoctamin-9 (782 aa).

Topologically, residues 1 to 198 are cytoplasmic; the sequence is MQGEESLRIL…LYFVWLGWYT (198 aa). The helical transmembrane segment at 199 to 219 threads the bilayer; that stretch reads YMLVPAALTGLLVFLSGFSLF. Residues 220 to 264 are Extracellular-facing; that stretch reads EASQISKEICEAHDILMCPLGDHSRRYQRLSETCTFAKLTHLFDN. The residue at position 250 (Ser250) is a Phosphoserine; by PKA. The chain crosses the membrane as a helical span at residues 265-285; the sequence is DGTVVFAIFMALWATVFLEIW. Residues 286–331 lie on the Cytoplasmic side of the membrane; the sequence is KRQRARVVLHWDLYVWDEEQEEMALQLINCPDYKLRPYQHSYLRST. The chain crosses the membrane as a helical span at residues 332 to 352; that stretch reads VILVLTLLMICLMIGMAHVLV. The Extracellular portion of the chain corresponds to 353 to 373; the sequence is VYRVLASALFSSSAVPFLEEQ. The chain crosses the membrane as a helical span at residues 374–394; sequence VTTAVVVTGALVHYVTIIIMT. Topologically, residues 395–423 are cytoplasmic; it reads KINRCVALKLCDFEMPRTFSERESRFTIR. A helical membrane pass occupies residues 424 to 444; sequence FFTLQFFTHFSSLIYIAFILG. The Extracellular portion of the chain corresponds to 445–552; that stretch reads RINGHPGKST…EMMIQYGFTT (108 aa). The chain crosses the membrane as a helical span at residues 553 to 573; that stretch reads IFVAAFPLAPLLALFSNLVEI. Residues 574 to 604 are Cytoplasmic-facing; the sequence is RLDAIKMVWLQRRLVPRKAKDIGTWLQVLET. Residues 605–625 traverse the membrane as a helical segment; sequence IGVLAVIANGMVIAFTSEFIP. At 626 to 703 the chain is on the extracellular side; the sequence is RVVYKYRYSP…QFWFLLAIRL (78 aa). Residues Asn641, Asn652, Asn674, and Asn690 are each glycosylated (N-linked (GlcNAc...) asparagine). The helical transmembrane segment at 704–724 threads the bilayer; the sequence is AFVILFEHVALCIKLIAAWFV. Topologically, residues 725-782 are cytoplasmic; it reads PDIPQSVKNKVLEVKYQRLREKMWHGRQRLGGVGAGSRPPMPAHPTPASIFSARSTDV. The disordered stretch occupies residues 756-782; that stretch reads GVGAGSRPPMPAHPTPASIFSARSTDV.

It belongs to the anoctamin family. In terms of processing, phosphorylated on serine residues by cAMP-dependent protein kinase A (PKA) which is essential for activation of its cation channel activity. Expressed in the kidney. Expressed in the olfactory epithelium.

It localises to the cell membrane. It is found in the endoplasmic reticulum. The catalysed reaction is a 1,2-diacyl-sn-glycero-3-phospho-L-serine(in) = a 1,2-diacyl-sn-glycero-3-phospho-L-serine(out). It catalyses the reaction a beta-D-galactosyl-(1&lt;-&gt;1')-N-acylsphing-4-enine(out) = a beta-D-galactosyl-(1&lt;-&gt;1')-N-acylsphing-4-enine(in). It carries out the reaction a 1,2-diacyl-sn-glycero-3-phosphocholine(in) = a 1,2-diacyl-sn-glycero-3-phosphocholine(out). The enzyme catalyses Ca(2+)(in) = Ca(2+)(out). The catalysed reaction is Na(+)(in) = Na(+)(out). It catalyses the reaction K(+)(in) = K(+)(out). Its activity is regulated as follows. Cation channel activity is activated via phosphorylation on serine residues by cAMP-dependent protein kinase A (PKA). In terms of biological role, PKA-activated nonselective cation channel. Discriminates poorly among cations but is more permeable to Ca(2+) ions than to monovalent cations. Acts as a calcium-activated calcium permeable channel which may operate as a endoplasmic reticulum (ER) Ca(2+)-leak channel, reducing the loading of the ER Ca(2+) store. Regulates intracellular Ca2+ signals, ion channel activity, and cytokine release in the renal tissue. Plays an important role in olfaction, amplifying cAMP-evoked cyclic nucleotide-gated (CNG) channel currents in the olfactory sensory neurons. Has calcium-dependent phospholipid scramblase activity; scrambles phosphatidylserine, phosphatidylcholine and galactosylceramide. Does not exhibit calcium-activated chloride channel (CaCC) activity. Can inhibit the activity of ANO1. This Homo sapiens (Human) protein is Anoctamin-9 (ANO9).